We begin with the raw amino-acid sequence, 393 residues long: Putative competence-damage inducible protein (393 aa).

Belongs to the CinA family.

This Streptococcus suis (strain 98HAH33) protein is Putative competence-damage inducible protein.